We begin with the raw amino-acid sequence, 34 residues long: Peptidoglycan hydrolase P7 (34 aa).

Residues 10-26 form a helical membrane-spanning segment; sequence VLITLGVLAAVNKVSAL.

The protein resides in the virion membrane. In terms of biological role, exolysin that catalyzes the cleavage of the host peptidoglycans during virus entry. The protein is Peptidoglycan hydrolase P7 (VII) of Pseudoalteromonas espejiana (Bacteriophage PM2).